The chain runs to 115 residues: Large ribosomal subunit protein bL19 (115 aa).

It belongs to the bacterial ribosomal protein bL19 family.

In terms of biological role, this protein is located at the 30S-50S ribosomal subunit interface and may play a role in the structure and function of the aminoacyl-tRNA binding site. This Tropheryma whipplei (strain TW08/27) (Whipple's bacillus) protein is Large ribosomal subunit protein bL19.